We begin with the raw amino-acid sequence, 405 residues long: Argininosuccinate synthase (405 aa).

ATP-binding positions include 10 to 18 (AYSGGLDTS) and Ala-37. Residues Tyr-88 and Ser-93 each contribute to the L-citrulline site. Gly-118 provides a ligand contact to ATP. L-aspartate-binding residues include Thr-120, Asn-124, and Asp-125. Asn-124 is a binding site for L-citrulline. Positions 128, 177, 186, 263, and 275 each coordinate L-citrulline.

The protein belongs to the argininosuccinate synthase family. Type 1 subfamily. As to quaternary structure, homotetramer.

The protein resides in the cytoplasm. The enzyme catalyses L-citrulline + L-aspartate + ATP = 2-(N(omega)-L-arginino)succinate + AMP + diphosphate + H(+). Its pathway is amino-acid biosynthesis; L-arginine biosynthesis; L-arginine from L-ornithine and carbamoyl phosphate: step 2/3. This is Argininosuccinate synthase from Acetivibrio thermocellus (strain ATCC 27405 / DSM 1237 / JCM 9322 / NBRC 103400 / NCIMB 10682 / NRRL B-4536 / VPI 7372) (Clostridium thermocellum).